The chain runs to 83 residues: Defensin-like protein 194 (83 aa).

The N-terminal stretch at 1-27 is a signal peptide; the sequence is MAMKSVSNFAIFLILFLVTSEISEIEA. Intrachain disulfides connect Cys-32–Cys-78, Cys-44–Cys-68, Cys-53–Cys-73, and Cys-57–Cys-75.

This sequence belongs to the DEFL family. Protease inhibitor I18 (RTI/MTI-2) subfamily.

It is found in the secreted. This Arabidopsis thaliana (Mouse-ear cress) protein is Defensin-like protein 194 (ATTI3).